The sequence spans 426 residues: Serine--tRNA ligase (426 aa).

235 to 237 (TAE) lines the L-serine pocket. 266 to 268 (RRE) serves as a coordination point for ATP. Residue Glu289 coordinates L-serine. 353–356 (EISS) is a binding site for ATP. L-serine is bound at residue Ser389.

The protein belongs to the class-II aminoacyl-tRNA synthetase family. Type-1 seryl-tRNA synthetase subfamily. In terms of assembly, homodimer. The tRNA molecule binds across the dimer.

It localises to the cytoplasm. It carries out the reaction tRNA(Ser) + L-serine + ATP = L-seryl-tRNA(Ser) + AMP + diphosphate + H(+). It catalyses the reaction tRNA(Sec) + L-serine + ATP = L-seryl-tRNA(Sec) + AMP + diphosphate + H(+). The protein operates within aminoacyl-tRNA biosynthesis; selenocysteinyl-tRNA(Sec) biosynthesis; L-seryl-tRNA(Sec) from L-serine and tRNA(Sec): step 1/1. Catalyzes the attachment of serine to tRNA(Ser). Is also able to aminoacylate tRNA(Sec) with serine, to form the misacylated tRNA L-seryl-tRNA(Sec), which will be further converted into selenocysteinyl-tRNA(Sec). The sequence is that of Serine--tRNA ligase from Trichormus variabilis (strain ATCC 29413 / PCC 7937) (Anabaena variabilis).